Consider the following 97-residue polypeptide: Bacterial microcompartment shell protein EutM (97 aa).

The BMC domain maps to 3-87 (ALGMIETRGL…PHGDLEEVFP (85 aa)).

It belongs to the bacterial microcompartments protein family. Homohexamer with a central pore of up to 8.6 Angstroms diameter. The hexamers pack into a two-dimensional array. Interacts with EutQ.

The protein localises to the bacterial microcompartment. The protein operates within amine and polyamine degradation; ethanolamine degradation. Its function is as follows. Probably a major component of the bacterial microcompartment (BMC) shell dedicated to ethanolamine degradation. Each homohexamer has a central pore with an opening of up to 8.6 Angstroms. A positively-charged funnel leads to the pore from each side of the hexamer. The pore probably allows metabolite passage into and out of the BMC. The protein is Bacterial microcompartment shell protein EutM (eutM) of Escherichia coli O6:H1 (strain CFT073 / ATCC 700928 / UPEC).